We begin with the raw amino-acid sequence, 82 residues long: Small ribosomal subunit protein bS16 (82 aa).

It belongs to the bacterial ribosomal protein bS16 family.

In Salmonella agona (strain SL483), this protein is Small ribosomal subunit protein bS16.